The primary structure comprises 475 residues: uncharacterized protein (475 aa).

A disordered region spans residues 42 to 292 (NLQNSLTGKT…NTRKGQRHNN (251 aa)). Composition is skewed to basic and acidic residues over residues 59 to 72 (EANH…KSED) and 119 to 134 (IAEK…DDSQ). Polar residues-rich tracts occupy residues 150–159 (ITPNFTHTPI) and 220–242 (NNTF…TSED). Positions 243-263 (SSSQAPHHSSSSGHAPSQQGG) are enriched in low complexity. The segment covering 277-289 (FHHKGRNTRKGQR) has biased composition (basic residues). The 90-residue stretch at 319 to 408 (NPYLCDVQAF…MSIKVRRKET (90 aa)) folds into the HTH La-type RNA-binding domain. At Thr408 the chain carries Phosphothreonine. Ser410 bears the Phosphoserine mark.

It localises to the cytoplasm. This is an uncharacterized protein from Schizosaccharomyces pombe (strain 972 / ATCC 24843) (Fission yeast).